Consider the following 489-residue polypeptide: Probable capsid protein (489 aa).

Positions 87–101 (RMERGESSETKREQQ) are enriched in basic and acidic residues. The disordered stretch occupies residues 87–111 (RMERGESSETKREQQDLGATRKRKI). The Nuclear localization signal signature appears at 107–110 (RKRK). The segment at 409–426 (CRCWICTEEGHYANECPN) adopts a CCHC-type zinc-finger fold. A disordered region spans residues 466–489 (ETTSEEESTTDSDSSSSDDEQLSF).

Belongs to the caulimoviridae capsid protein family. In terms of assembly, interacts (via nuclear localization signal) with host importin alpha.

It is found in the virion. Its subcellular location is the host nucleus. Its function is as follows. Self assembles to form an icosahedral capsid, about 50 nm in diameter, nm, composed of 420 subunits of the viral capsid protein. The capsid encapsulates the genomic dsDNA. Following virus entry into host cell, provides nuclear import of the viral genome. Virus particles do not enter the nucleus, but dock at the nuclear membrane through the interaction with host importins. The sequence is that of Probable capsid protein from Scrophularia californica (California bee plant).